The sequence spans 1943 residues: Cadherin-86C (1943 aa).

Residues 1-102 (MASTSSSQPE…QNQQMQHHWP (102 aa)) form a disordered region. At 1–934 (MASTSSSQPE…TDTQYKAENK (934 aa)) the chain is on the extracellular side. Asn12 carries an N-linked (GlcNAc...) asparagine glycan. The span at 50 to 89 (PHHHHHHHHQHHHHHRLKQHHRHHHHHHRLQHHHHHHQQQ) shows a compositional bias: basic residues. A compositionally biased stretch (low complexity) spans 90–100 (HNHQNQQMQHH). 5 Cadherin domains span residues 238-366 (CSIT…PPVF), 367-483 (TSAP…PPYF), 484-600 (ENDH…APVF), 601-708 (EQPA…TPIF), and 709-832 (DKDL…SVKF). 7 N-linked (GlcNAc...) asparagine glycosylation sites follow: Asn244, Asn419, Asn531, Asn579, Asn585, Asn612, and Asn645. N-linked (GlcNAc...) asparagine glycosylation occurs at Asn912. The chain crosses the membrane as a helical span at residues 935 to 955 (VLFWLLILLATLVALTILILL). Residues 956–1943 (LCCICSWCPL…NSGGESPQYS (988 aa)) lie on the Cytoplasmic side of the membrane. Disordered regions lie at residues 1038-1058 (DVGR…SAEE), 1390-1442 (KPSR…RKRI), 1458-1516 (EEEE…SHNR), 1546-1695 (YKHS…ERNV), and 1707-1895 (KSSV…DDHD). A compositionally biased stretch (basic and acidic residues) spans 1047 to 1058 (EGDRRHIQSAEE). Residues 1426 to 1442 (IKRRRTKKRPRQPRKRI) show a composition bias toward basic residues. 2 stretches are compositionally biased toward basic and acidic residues: residues 1486–1497 (QLSDESRKDQSR) and 1507–1516 (HRSESDSHNR). The span at 1552–1568 (DFDEDDTEYSIDSDGDE) shows a compositional bias: acidic residues. Over residues 1580-1602 (QENERYRRQERTYAEPENPVDRK) the composition is skewed to basic and acidic residues. Residues 1633 to 1667 (KQTSSEPPHNRVSISKYESTVTENGRKLMSTSTEI) show a composition bias toward polar residues. Residues 1709–1724 (SVSGRTSTESSKSQPS) show a composition bias toward low complexity. 4 stretches are compositionally biased toward basic and acidic residues: residues 1754 to 1764 (TGGRYKPEPAP), 1774 to 1793 (LLKE…ETDT), 1800 to 1810 (HSEHRFERENA), and 1837 to 1863 (KESK…ENEV). Residues 1879 to 1889 (HPTQKQLNAST) are compositionally biased toward polar residues.

In terms of tissue distribution, as cell intercalation proceeds, a row of stigmatophore cells surrounding the spiracular chamber show expression of Cad86C. Expression is regulated by the Abd-B cascade, requiring sal. Expressed in a broad region of the morphogenetic furrow and in clusters of cells posterior to the morphogenetic furrow. Weakly expressed in the epithelium of wing imaginal disks. In eye imaginal disk cells within the morphogenetic furrow, expression is localized to the apical region.

The protein resides in the cell membrane. Its function is as follows. Cadherins are calcium-dependent cell adhesion proteins. They preferentially interact with themselves in a homophilic manner in connecting cells. The protein is Cadherin-86C (Cad86C) of Drosophila melanogaster (Fruit fly).